A 942-amino-acid chain; its full sequence is Eukaryotic translation initiation factor 3 subunit A (942 aa).

One can recognise a PCI domain in the interval Phe320–Phe494. Coiled coils occupy residues Lys499 to Ile529, Ile588 to Glu669, Ser705 to Lys734, and Ile821 to Gln912. The segment at Gly502–Pro546 is disordered. Acidic residues predominate over residues Val504–Asn538. Basic and acidic residues-rich tracts occupy residues Arg836 to Ser870 and Arg889 to Ala911. A disordered region spans residues Arg836 to Lys942.

It belongs to the eIF-3 subunit A family. In terms of assembly, component of the eukaryotic translation initiation factor 3 (eIF-3) complex.

The protein localises to the cytoplasm. Functionally, RNA-binding component of the eukaryotic translation initiation factor 3 (eIF-3) complex, which is involved in protein synthesis of a specialized repertoire of mRNAs and, together with other initiation factors, stimulates binding of mRNA and methionyl-tRNAi to the 40S ribosome. The eIF-3 complex specifically targets and initiates translation of a subset of mRNAs involved in cell proliferation. The protein is Eukaryotic translation initiation factor 3 subunit A of Vanderwaltozyma polyspora (strain ATCC 22028 / DSM 70294 / BCRC 21397 / CBS 2163 / NBRC 10782 / NRRL Y-8283 / UCD 57-17) (Kluyveromyces polysporus).